The chain runs to 327 residues: Cytochrome c biogenesis protein CcsA (327 aa).

8 helical membrane passes run 13 to 33 (ISFS…LVNL), 46 to 66 (GIII…IYSG), 73 to 93 (LYES…VSYF), 101 to 121 (LNAI…SGLL), 145 to 165 (MILG…LLVI), 233 to 253 (IISL…VWAN), 262 to 282 (WDPK…YLHI), and 294 to 314 (AIVA…VNLL).

It belongs to the CcmF/CycK/Ccl1/NrfE/CcsA family. In terms of assembly, may interact with Ccs1.

Its subcellular location is the plastid. It localises to the chloroplast thylakoid membrane. Its function is as follows. Required during biogenesis of c-type cytochromes (cytochrome c6 and cytochrome f) at the step of heme attachment. The sequence is that of Cytochrome c biogenesis protein CcsA from Lobularia maritima (Sweet alyssum).